Here is a 159-residue protein sequence, read N- to C-terminus: Ribosomal RNA large subunit methyltransferase H (159 aa).

Residue glycine 108 participates in S-adenosyl-L-methionine binding.

This sequence belongs to the RNA methyltransferase RlmH family. In terms of assembly, homodimer.

Its subcellular location is the cytoplasm. The enzyme catalyses pseudouridine(1915) in 23S rRNA + S-adenosyl-L-methionine = N(3)-methylpseudouridine(1915) in 23S rRNA + S-adenosyl-L-homocysteine + H(+). Specifically methylates the pseudouridine at position 1915 (m3Psi1915) in 23S rRNA. This chain is Ribosomal RNA large subunit methyltransferase H, found in Lactobacillus gasseri (strain ATCC 33323 / DSM 20243 / BCRC 14619 / CIP 102991 / JCM 1131 / KCTC 3163 / NCIMB 11718 / NCTC 13722 / AM63).